We begin with the raw amino-acid sequence, 284 residues long: 2-dehydro-3-deoxyphosphooctonate aldolase (284 aa).

The protein belongs to the KdsA family.

It is found in the cytoplasm. It catalyses the reaction D-arabinose 5-phosphate + phosphoenolpyruvate + H2O = 3-deoxy-alpha-D-manno-2-octulosonate-8-phosphate + phosphate. Its pathway is carbohydrate biosynthesis; 3-deoxy-D-manno-octulosonate biosynthesis; 3-deoxy-D-manno-octulosonate from D-ribulose 5-phosphate: step 2/3. It participates in bacterial outer membrane biogenesis; lipopolysaccharide biosynthesis. The sequence is that of 2-dehydro-3-deoxyphosphooctonate aldolase from Paraburkholderia phymatum (strain DSM 17167 / CIP 108236 / LMG 21445 / STM815) (Burkholderia phymatum).